Here is a 285-residue protein sequence, read N- to C-terminus: Phosphatidate cytidylyltransferase (285 aa).

8 helical membrane-spanning segments follow: residues 10–30, 56–76, 93–113, 121–141, 151–171, 190–210, 213–233, and 264–284; these read FVLIPVVIAALFLLPPVGFAI, VWLAVLCGLLLALMLFLLPEY, LGWWIVALLLVLFYPGSAAIW, LIFGVLTIVPFFWGMLALRAW, AIWLLYVMILVWGADSGAYMF, WQGFIGGLATAAVISWGYGMW, LDVAPVTLLICSIVAALASVL, and IDSLTAAVPVFACLLLLVFRT.

Belongs to the CDS family.

The protein resides in the cell inner membrane. The enzyme catalyses a 1,2-diacyl-sn-glycero-3-phosphate + CTP + H(+) = a CDP-1,2-diacyl-sn-glycerol + diphosphate. The protein operates within phospholipid metabolism; CDP-diacylglycerol biosynthesis; CDP-diacylglycerol from sn-glycerol 3-phosphate: step 3/3. The polypeptide is Phosphatidate cytidylyltransferase (cdsA) (Escherichia coli O157:H7).